We begin with the raw amino-acid sequence, 433 residues long: Cell adhesion molecule 2 (433 aa).

Residues 1 to 24 (MILQPSALLCLSSLWGVIVQASQG) form the signal peptide. The Extracellular segment spans residues 25-365 (QFPVTQNVTV…ALPGPVATDH (341 aa)). The Ig-like V-type domain maps to 27–114 (PVTQNVTVVE…SLFTMPVKTS (88 aa)). N-linked (GlcNAc...) asparagine glycosylation is found at asparagine 31, asparagine 41, and asparagine 51. 3 disulfide bridges follow: cysteine 44–cysteine 104, cysteine 146–cysteine 203, and cysteine 248–cysteine 296. Ig-like C2-type domains lie at 127 to 217 (PHIS…PQIA) and 227 to 312 (PTVR…YVLI). 2 N-linked (GlcNAc...) asparagine glycosylation sites follow: asparagine 287 and asparagine 291. Residues 366–386 (ALIGGVVAVVVFVTLCSIILI) form a helical membrane-spanning segment. At 387-433 (GRYLARHKGTYLTNEAKGAEDAPDADTAIINAEGSQVNAEEKKEYFI) the chain is on the cytoplasmic side.

The protein belongs to the nectin family.

The protein localises to the membrane. The protein is Cell adhesion molecule 2 (cadm2) of Xenopus tropicalis (Western clawed frog).